Consider the following 453-residue polypeptide: MTRPVHACPLVSRKAPPLSGKVHVPGDKSISHRALMLSALAVGESFVEGLLEGEDVLATAEAMRSMGADIRKDEKGCWHIHGVGVGSLLQPQNALDMGNSGTSTRLLMGVVASHPITATFIGDASLSKRPMGRISTPLSLMGARFSAAEGNRLPMTVTGLYPAIPIEYRLPVASAQVKSAILLAGLNTPGITRVIEPVPTRDHSERMLKGYGANLSVEENDGVRIISIHGEAELKPQHIIVPGDPSSAAFLVVAGLIVPGSDLIVENVGLNPTRSGLYTMLKAMGGQIEYLNPREVGGEPVADLSVKYSHLKAIDVPPSIVPSMIDEFPILFIAAAMAEGKSTLQGLAELRVKESDRIAVMAEGLKALGVSLEEKEDGLIIEGSAGEGLGQKGKMVSIAAHLDHRIAMSFAVAGLVSEGGVTIDDRRPIMTSFPVFGQLFKELGAEFEMGLVK.

3-phosphoshikimate is bound by residues K28, S29, and R33. K28 serves as a coordination point for phosphoenolpyruvate. Residues G101 and R129 each coordinate phosphoenolpyruvate. Residues S174, Q176, D326, and K353 each contribute to the 3-phosphoshikimate site. Q176 provides a ligand contact to phosphoenolpyruvate. Catalysis depends on D326, which acts as the Proton acceptor. Phosphoenolpyruvate-binding residues include R357 and R405.

The protein belongs to the EPSP synthase family. In terms of assembly, monomer.

The protein localises to the cytoplasm. It carries out the reaction 3-phosphoshikimate + phosphoenolpyruvate = 5-O-(1-carboxyvinyl)-3-phosphoshikimate + phosphate. Its pathway is metabolic intermediate biosynthesis; chorismate biosynthesis; chorismate from D-erythrose 4-phosphate and phosphoenolpyruvate: step 6/7. Its function is as follows. Catalyzes the transfer of the enolpyruvyl moiety of phosphoenolpyruvate (PEP) to the 5-hydroxyl of shikimate-3-phosphate (S3P) to produce enolpyruvyl shikimate-3-phosphate and inorganic phosphate. This is 3-phosphoshikimate 1-carboxyvinyltransferase from Zymomonas mobilis subsp. mobilis (strain ATCC 31821 / ZM4 / CP4).